A 266-amino-acid chain; its full sequence is MICOS complex subunit MIC27 (266 aa).

Residues methionine 1–lysine 27 constitute a mitochondrion transit peptide. The Mitochondrial intermembrane portion of the chain corresponds to glutamate 28–aspartate 110. A helical membrane pass occupies residues phenylalanine 111–alanine 129. At arginine 130–lysine 137 the chain is on the mitochondrial matrix side. A helical transmembrane segment spans residues isoleucine 138–valine 155. Over glutamine 156–isoleucine 266 the chain is Mitochondrial intermembrane. Serine 204 is subject to Phosphoserine.

It belongs to the apolipoprotein O/MICOS complex subunit Mic27 family. Component of the mitochondrial contact site and cristae organizing system (MICOS) complex, composed of at least MICOS10/MIC10, CHCHD3/MIC19, CHCHD6/MIC25, APOOL/MIC27, IMMT/MIC60, APOO/MIC23/MIC26 and MICOS13/MIC13. This complex was also known under the names MINOS or MitOS complex. The MICOS complex associates with mitochondrial outer membrane proteins SAMM50, MTX1 and MTX2 (together described as components of the mitochondrial outer membrane sorting assembly machinery (SAM) complex) and DNAJC11, mitochondrial inner membrane protein TMEM11 and with HSPA9. The MICOS and SAM complexes together with DNAJC11 are part of a large protein complex spanning both membranes termed the mitochondrial intermembrane space bridging (MIB) complex. Interacts with MICOS10/MIC10, IMMT/MIC60 and APOO/MIC23/MIC26.

Its subcellular location is the mitochondrion inner membrane. It localises to the mitochondrion. Functionally, component of the MICOS complex, a large protein complex of the mitochondrial inner membrane that plays crucial roles in the maintenance of crista junctions, inner membrane architecture, and formation of contact sites to the outer membrane. Specifically binds to cardiolipin (in vitro) but not to the precursor lipid phosphatidylglycerol. Plays a crucial role in crista junction formation and mitochondrial function. This is MICOS complex subunit MIC27 (APOOL) from Pongo abelii (Sumatran orangutan).